Here is a 270-residue protein sequence, read N- to C-terminus: 4-hydroxy-tetrahydrodipicolinate reductase (270 aa).

NAD(+) is bound by residues glycine 8–methionine 13, aspartate 34, glycine 102–threonine 104, and serine 128–tyrosine 131. Histidine 160 serves as the catalytic Proton donor/acceptor. Histidine 161 provides a ligand contact to (S)-2,3,4,5-tetrahydrodipicolinate. The Proton donor role is filled by lysine 164. Glycine 170–threonine 171 contributes to the (S)-2,3,4,5-tetrahydrodipicolinate binding site.

This sequence belongs to the DapB family.

Its subcellular location is the cytoplasm. The enzyme catalyses (S)-2,3,4,5-tetrahydrodipicolinate + NAD(+) + H2O = (2S,4S)-4-hydroxy-2,3,4,5-tetrahydrodipicolinate + NADH + H(+). It carries out the reaction (S)-2,3,4,5-tetrahydrodipicolinate + NADP(+) + H2O = (2S,4S)-4-hydroxy-2,3,4,5-tetrahydrodipicolinate + NADPH + H(+). It functions in the pathway amino-acid biosynthesis; L-lysine biosynthesis via DAP pathway; (S)-tetrahydrodipicolinate from L-aspartate: step 4/4. Its function is as follows. Catalyzes the conversion of 4-hydroxy-tetrahydrodipicolinate (HTPA) to tetrahydrodipicolinate. This is 4-hydroxy-tetrahydrodipicolinate reductase from Methanococcus maripaludis (strain C5 / ATCC BAA-1333).